The primary structure comprises 306 residues: Putative dihydroorotate dehydrogenase A (fumarate) (306 aa).

FMN-binding positions include Ser24 and Lys48–Ser49. Residues Lys48, Asn72–Leu76, and Asn129 each bind substrate. An FMN-binding site is contributed by Asn129. The active-site Nucleophile is the Cys132. The FMN site is built by Lys167 and Ile192. A substrate-binding site is contributed by Asn193–Ser194. Residues Gly218 and Gly244–Gly245 contribute to the FMN site.

Belongs to the dihydroorotate dehydrogenase family. Type 1 subfamily. As to quaternary structure, homodimer. It depends on FMN as a cofactor.

It is found in the cytoplasm. The catalysed reaction is (S)-dihydroorotate + fumarate = orotate + succinate. It functions in the pathway pyrimidine metabolism; UMP biosynthesis via de novo pathway. Catalyzes the conversion of dihydroorotate to orotate with fumarate as the electron acceptor. The chain is Putative dihydroorotate dehydrogenase A (fumarate) (pyrD) from Aeropyrum pernix (strain ATCC 700893 / DSM 11879 / JCM 9820 / NBRC 100138 / K1).